Here is a 380-residue protein sequence, read N- to C-terminus: Ceramide-binding protein svf1 (380 aa).

Residues 1-18 (MKAWLQSSISYYTGTAEP) form a peripherally associates with membranes region.

The protein belongs to the SVF1 family.

The protein localises to the golgi apparatus. It is found in the cis-Golgi network membrane. The protein resides in the endoplasmic reticulum membrane. It localises to the cytoplasm. Its subcellular location is the nucleus. Its function is as follows. Ceramide-binding protein that may transfer ceramides from the endoplasmic reticulum membrane to the cis-Golgi network membrane, and is thereby required for the biosynthesis of complex sphingolipids. This Schizosaccharomyces pombe (strain 972 / ATCC 24843) (Fission yeast) protein is Ceramide-binding protein svf1.